Reading from the N-terminus, the 280-residue chain is Phosphatidylserine decarboxylase proenzyme (280 aa).

Residues aspartate 88, histidine 145, and serine 249 each act as charge relay system; for autoendoproteolytic cleavage activity in the active site. Residue serine 249 is the Schiff-base intermediate with substrate; via pyruvic acid; for decarboxylase activity of the active site. Serine 249 bears the Pyruvic acid (Ser); by autocatalysis mark.

Belongs to the phosphatidylserine decarboxylase family. PSD-B subfamily. Prokaryotic type I sub-subfamily. Heterodimer of a large membrane-associated beta subunit and a small pyruvoyl-containing alpha subunit. Requires pyruvate as cofactor. Is synthesized initially as an inactive proenzyme. Formation of the active enzyme involves a self-maturation process in which the active site pyruvoyl group is generated from an internal serine residue via an autocatalytic post-translational modification. Two non-identical subunits are generated from the proenzyme in this reaction, and the pyruvate is formed at the N-terminus of the alpha chain, which is derived from the carboxyl end of the proenzyme. The autoendoproteolytic cleavage occurs by a canonical serine protease mechanism, in which the side chain hydroxyl group of the serine supplies its oxygen atom to form the C-terminus of the beta chain, while the remainder of the serine residue undergoes an oxidative deamination to produce ammonia and the pyruvoyl prosthetic group on the alpha chain. During this reaction, the Ser that is part of the protease active site of the proenzyme becomes the pyruvoyl prosthetic group, which constitutes an essential element of the active site of the mature decarboxylase.

It is found in the cell membrane. It carries out the reaction a 1,2-diacyl-sn-glycero-3-phospho-L-serine + H(+) = a 1,2-diacyl-sn-glycero-3-phosphoethanolamine + CO2. It functions in the pathway phospholipid metabolism; phosphatidylethanolamine biosynthesis; phosphatidylethanolamine from CDP-diacylglycerol: step 2/2. In terms of biological role, catalyzes the formation of phosphatidylethanolamine (PtdEtn) from phosphatidylserine (PtdSer). The sequence is that of Phosphatidylserine decarboxylase proenzyme from Chromobacterium violaceum (strain ATCC 12472 / DSM 30191 / JCM 1249 / CCUG 213 / NBRC 12614 / NCIMB 9131 / NCTC 9757 / MK).